A 484-amino-acid polypeptide reads, in one-letter code: Glutamate--tRNA ligase (484 aa).

Positions 10 to 20 (PSPTGYLHVGG) match the 'HIGH' region motif. The 'KMSKS' region signature appears at 252 to 256 (KLSKR). Position 255 (K255) interacts with ATP.

Belongs to the class-I aminoacyl-tRNA synthetase family. Glutamate--tRNA ligase type 1 subfamily. As to quaternary structure, monomer.

It localises to the cytoplasm. The enzyme catalyses tRNA(Glu) + L-glutamate + ATP = L-glutamyl-tRNA(Glu) + AMP + diphosphate. Functionally, catalyzes the attachment of glutamate to tRNA(Glu) in a two-step reaction: glutamate is first activated by ATP to form Glu-AMP and then transferred to the acceptor end of tRNA(Glu). This is Glutamate--tRNA ligase from Mycoplasma genitalium (strain ATCC 33530 / DSM 19775 / NCTC 10195 / G37) (Mycoplasmoides genitalium).